Here is a 273-residue protein sequence, read N- to C-terminus: 4-hydroxy-tetrahydrodipicolinate reductase (273 aa).

Residues 12 to 17 and Glu-38 contribute to the NAD(+) site; that span reads GAGGRM. Position 39 (Arg-39) interacts with NADP(+). Residues 102 to 104 and 126 to 129 contribute to the NAD(+) site; these read GTT and AANF. Catalysis depends on His-159, which acts as the Proton donor/acceptor. Residue His-160 coordinates (S)-2,3,4,5-tetrahydrodipicolinate. Lys-163 acts as the Proton donor in catalysis. 169 to 170 contacts (S)-2,3,4,5-tetrahydrodipicolinate; that stretch reads GT.

The protein belongs to the DapB family. As to quaternary structure, homotetramer.

It localises to the cytoplasm. The enzyme catalyses (S)-2,3,4,5-tetrahydrodipicolinate + NAD(+) + H2O = (2S,4S)-4-hydroxy-2,3,4,5-tetrahydrodipicolinate + NADH + H(+). It catalyses the reaction (S)-2,3,4,5-tetrahydrodipicolinate + NADP(+) + H2O = (2S,4S)-4-hydroxy-2,3,4,5-tetrahydrodipicolinate + NADPH + H(+). It participates in amino-acid biosynthesis; L-lysine biosynthesis via DAP pathway; (S)-tetrahydrodipicolinate from L-aspartate: step 4/4. Functionally, catalyzes the conversion of 4-hydroxy-tetrahydrodipicolinate (HTPA) to tetrahydrodipicolinate. The chain is 4-hydroxy-tetrahydrodipicolinate reductase from Escherichia fergusonii (strain ATCC 35469 / DSM 13698 / CCUG 18766 / IAM 14443 / JCM 21226 / LMG 7866 / NBRC 102419 / NCTC 12128 / CDC 0568-73).